The following is a 116-amino-acid chain: Large-conductance mechanosensitive channel (116 aa).

A run of 2 helical transmembrane segments spans residues 7-27 (EFALKGNVLDLAIAVVMGAAF) and 64-84 (GLFIQSIIDFIIIAFALFIFV).

It belongs to the MscL family. Homopentamer.

Its subcellular location is the cell membrane. Functionally, channel that opens in response to stretch forces in the membrane lipid bilayer. May participate in the regulation of osmotic pressure changes within the cell. The polypeptide is Large-conductance mechanosensitive channel (Staphylococcus epidermidis (strain ATCC 35984 / DSM 28319 / BCRC 17069 / CCUG 31568 / BM 3577 / RP62A)).